The sequence spans 339 residues: Heat-inducible transcription repressor HrcA (339 aa).

This sequence belongs to the HrcA family.

Negative regulator of class I heat shock genes (grpE-dnaK-dnaJ and groELS operons). Prevents heat-shock induction of these operons. This chain is Heat-inducible transcription repressor HrcA, found in Clostridium perfringens (strain ATCC 13124 / DSM 756 / JCM 1290 / NCIMB 6125 / NCTC 8237 / Type A).